The following is a 666-amino-acid chain: uncharacterized protein (666 aa).

Positions 263–553 constitute an RNB domain; sequence RFDLTTLKTY…THFQMKAYLR (291 aa).

The protein belongs to the RNR ribonuclease family.

This is an uncharacterized protein from Synechocystis sp. (strain ATCC 27184 / PCC 6803 / Kazusa).